The sequence spans 353 residues: Nicotinate-nucleotide--dimethylbenzimidazole phosphoribosyltransferase (353 aa).

The Proton acceptor role is filled by E318.

The protein belongs to the CobT family.

The catalysed reaction is 5,6-dimethylbenzimidazole + nicotinate beta-D-ribonucleotide = alpha-ribazole 5'-phosphate + nicotinate + H(+). The protein operates within nucleoside biosynthesis; alpha-ribazole biosynthesis; alpha-ribazole from 5,6-dimethylbenzimidazole: step 1/2. Its function is as follows. Catalyzes the synthesis of alpha-ribazole-5'-phosphate from nicotinate mononucleotide (NAMN) and 5,6-dimethylbenzimidazole (DMB). The sequence is that of Nicotinate-nucleotide--dimethylbenzimidazole phosphoribosyltransferase from Geobacter metallireducens (strain ATCC 53774 / DSM 7210 / GS-15).